The chain runs to 392 residues: Putative nicotinate phosphoribosyltransferase (392 aa).

Tyr-21, Phe-138, and Thr-179 together coordinate nicotinate. Residue His-182 is modified to Phosphohistidine. Arg-235 serves as a coordination point for nicotinate. 5-phospho-alpha-D-ribose 1-diphosphate-binding residues include Ser-240, Gly-272, and Thr-293. Zn(2+) contacts are provided by Cys-330, Cys-333, Cys-348, and Cys-350.

The protein belongs to the NAPRTase family. Highly divergent. In terms of assembly, homodimer. Forms a trimer of dimers in the crystal. In terms of processing, transiently phosphorylated on a His residue during the reaction cycle. Phosphorylation strongly increases the affinity for substrates and increases the rate of nicotinate D-ribonucleotide production. Dephosphorylation regenerates the low-affinity form of the enzyme, leading to product release.

The catalysed reaction is nicotinate + 5-phospho-alpha-D-ribose 1-diphosphate + ATP + H2O = nicotinate beta-D-ribonucleotide + ADP + phosphate + diphosphate. The protein operates within cofactor biosynthesis; NAD(+) biosynthesis; nicotinate D-ribonucleotide from nicotinate: step 1/1. In terms of biological role, catalyzes the synthesis of beta-nicotinate D-ribonucleotide from nicotinate and 5-phospho-D-ribose 1-phosphate at the expense of ATP. In Thermoplasma acidophilum (strain ATCC 25905 / DSM 1728 / JCM 9062 / NBRC 15155 / AMRC-C165), this protein is Putative nicotinate phosphoribosyltransferase.